Consider the following 160-residue polypeptide: MRCPYCQYEDTQVKDSRPAEEGAVIRRRRVCSVCGGRFTTFERVQLRELLITKKNGRCEPFDRDKLMRSVDVAVRKRNIDPDRIEQAISGIVRQLESLGEPEIASEKIGHLVMEALKGIDDIAYIRFASVYRDFRNASDFHDIIDELSKGIADTESRFDE.

Residues 3-34 (CPYCQYEDTQVKDSRPAEEGAVIRRRRVCSVC) fold into a zinc finger. The ATP-cone domain maps to 49-139 (LLITKKNGRC…VYRDFRNASD (91 aa)).

The protein belongs to the NrdR family. Zn(2+) serves as cofactor.

Its function is as follows. Negatively regulates transcription of bacterial ribonucleotide reductase nrd genes and operons by binding to NrdR-boxes. The sequence is that of Transcriptional repressor NrdR from Bartonella tribocorum (strain CIP 105476 / IBS 506).